Consider the following 522-residue polypeptide: Glutamyl-tRNA(Gln) amidotransferase subunit A (522 aa).

Residues lysine 88 and serine 163 each act as charge relay system in the active site. Serine 187 functions as the Acyl-ester intermediate in the catalytic mechanism.

This sequence belongs to the amidase family. GatA subfamily. As to quaternary structure, heterotrimer of A, B and C subunits.

The enzyme catalyses L-glutamyl-tRNA(Gln) + L-glutamine + ATP + H2O = L-glutaminyl-tRNA(Gln) + L-glutamate + ADP + phosphate + H(+). Allows the formation of correctly charged Gln-tRNA(Gln) through the transamidation of misacylated Glu-tRNA(Gln) in organisms which lack glutaminyl-tRNA synthetase. The reaction takes place in the presence of glutamine and ATP through an activated gamma-phospho-Glu-tRNA(Gln). This chain is Glutamyl-tRNA(Gln) amidotransferase subunit A, found in Paenarthrobacter aurescens (strain TC1).